The following is a 764-amino-acid chain: uncharacterized protein (764 aa).

This is an uncharacterized protein from Acanthamoeba polyphaga (Amoeba).